Reading from the N-terminus, the 347-residue chain is MITERQQNILRLIIQNYTNTGLPVGSKKLMEDGIASSSATIRNDMKALEEYGLLAKTHSSSGRIPSMAGYRYYVDHLLQPTQVEENELRRIRQSFGKEFHEINDIIRQSAEILSELTSYTAFSLGPEVKERKLTGFRMVPLNDRQVLAIIVTDKGNVENQVFAIPAAVSSQDLEKMTQIINDKLVGQPLLTVYHRLRTEIPMILHRYFQTPEGMMNLFDEMLGHAFEEKVFVGGRMNLLDFGIKQDIEQLKSVYSFMQNSDELTHLLNGSATTENPIVFRIGSEIGNNLLEDMSMITATYEVSGHGKGTIALLGPTSMPYSKIFGLVDTFRHELASQLGDYYRFLGN.

The protein belongs to the HrcA family.

Functionally, negative regulator of class I heat shock genes (grpE-dnaK-dnaJ and groELS operons). Prevents heat-shock induction of these operons. The protein is Heat-inducible transcription repressor HrcA of Enterococcus faecalis (strain ATCC 700802 / V583).